The primary structure comprises 95 residues: Non-specific lipid-transfer protein (95 aa).

3 disulfide bridges follow: Cys4–Cys52, Cys14–Cys29, and Cys50–Cys90.

The protein belongs to the plant LTP family. As to expression, seeds.

In terms of biological role, plant non-specific lipid-transfer proteins transfer phospholipids as well as galactolipids across membranes. May play a role in wax or cutin deposition in the cell walls of expanding epidermal cells and certain secretory tissues. In Eleusine coracana (Indian finger millet), this protein is Non-specific lipid-transfer protein.